Reading from the N-terminus, the 229-residue chain is Serine acetyltransferase (229 aa).

Belongs to the transferase hexapeptide repeat family.

Its subcellular location is the cytoplasm. The enzyme catalyses L-serine + acetyl-CoA = O-acetyl-L-serine + CoA. Its pathway is amino-acid biosynthesis; L-cysteine biosynthesis; L-cysteine from L-serine: step 1/2. In terms of biological role, catalyzes the acetylation of serine by acetyl-CoA to produce O-acetylserine (OAS). The protein is Serine acetyltransferase (cysE) of Mycobacterium tuberculosis (strain ATCC 25618 / H37Rv).